The following is a 21-amino-acid chain: Cupiennin-6a (21 aa).

Serine 21 is modified (serine amide).

In terms of tissue distribution, expressed by the venom gland.

The protein localises to the secreted. The chain is Cupiennin-6a from Cupiennius salei (American wandering spider).